A 631-amino-acid polypeptide reads, in one-letter code: Shootin-1 (631 aa).

An N-acetylmethionine modification is found at M1. S3 and S4 each carry phosphoserine. Residues 7 to 353 adopt a coiled-coil conformation; it reads EKQLQLITSL…RVNQSENSVP (347 aa). A Phosphoserine; by PAK1 modification is found at S101. S249 carries the post-translational modification Phosphoserine. Residues 343–511 form a disordered region; sequence KRVNQSENSV…SESKSMPVLG (169 aa). A compositionally biased stretch (pro residues) spans 352 to 369; it reads VPPPPPPPPPLPPPPPNP. At S375 the chain carries Phosphoserine. Basic and acidic residues predominate over residues 403-418; sequence TDLKRQAVEEMMDRIK. Residues 456–465 show a composition bias toward polar residues; it reads LNKSTSSRSL. At S473 the chain carries Phosphoserine. The residue at position 487 (T487) is a Phosphothreonine. Residues 490–505 are compositionally biased toward polar residues; that stretch reads ADSSSPTGILATSESK. S494 carries the phosphoserine modification. T496 bears the Phosphothreonine mark. Phosphoserine is present on residues S506, S515, S532, and S534. Disordered regions lie at residues 524–566 and 579–631; these read KTLE…IGCR and VVVL…SSNC. The residue at position 537 (T537) is a Phosphothreonine. Residues 550–561 show a composition bias toward polar residues; it reads CTSSKVTFQPPS. Positions 590-631 are enriched in basic and acidic residues; it reads PQTKDQVAEKDPTQHKEDEGEIQPENKEDSIENVRETDSSNC.

The protein belongs to the shootin family. Interacts with L1CAM; this interaction occurs in axonal growth cones. Interacts with actin filament retrograde flow; this interaction is enhanced in a netrin-1- and PAK1-dependent manner and promotes F-actin-substrate coupling and concomitant formation of traction forces at axonal growth cones. Interacts with RUFY3. Interacts with PFN2. Interacts (via N-terminus) with KIF20B; this interaction is direct and promotes the association of SHTN1 to microtubules in primary neurons. Associates with microtubule. Phosphorylated on Ser-101 and Ser-249 by PAK1 through a CDC42- and RAC1-dependent signaling pathway, which enhances its association with F-actin retrograde flow in filopodia and lamellipodia of axonal growth cones. Phosphorylation on Ser-101 and Ser-249 is increased by netrin-1.

The protein resides in the perikaryon. Its subcellular location is the cell projection. It localises to the axon. It is found in the growth cone. The protein localises to the cytoplasm. The protein resides in the cytoskeleton. Its subcellular location is the filopodium. It localises to the lamellipodium. Functionally, involved in the generation of internal asymmetric signals required for neuronal polarization and neurite outgrowth. Mediates netrin-1-induced F-actin-substrate coupling or 'clutch engagement' within the axon growth cone through activation of CDC42, RAC1 and PAK1-dependent signaling pathway, thereby converting the F-actin retrograde flow into traction forces, concomitantly with filopodium extension and axon outgrowth. Plays a role in cytoskeletal organization by regulating the subcellular localization of phosphoinositide 3-kinase (PI3K) activity at the axonal growth cone. Also plays a role in regenerative neurite outgrowth. In the developing cortex, cooperates with KIF20B to promote both the transition from the multipolar to the bipolar stage and the radial migration of cortical neurons from the ventricular zone toward the superficial layer of the neocortex. Involved in the accumulation of phosphatidylinositol 3,4,5-trisphosphate (PIP3) in the growth cone of primary hippocampal neurons. The sequence is that of Shootin-1 from Homo sapiens (Human).